Consider the following 239-residue polypeptide: MPKSCAARQCCNRYSNRRKQLTFHRFPFSRPELLKEWVLNIGRGDFEPKQHTVICSEHFRPECFSAFGNRKNLKHNAVPTVFAFQGPPQLVRENTDPTGRSGDATSGERKVLPETGSGECGLGRKMDTTVEVLQLPPEVGGLGAQVPPHTPETSGVPGQPASPPELKRRLPTQPSDHSYALLDLDTLKKKLFLTLKENEKLRRRLKAQRLVMRRMCSRLRARLAGRPGLQARPRLGQQS.

The THAP-type zinc-finger motif lies at 1 to 82 (MPKSCAARQC…LKHNAVPTVF (82 aa)). 2 disordered regions span residues 88 to 125 (PQLV…LGRK) and 139 to 174 (VGGL…PTQP). The short motif at 176–179 (DHSY) is the HCFC1-binding motif (HBM) element.

As to quaternary structure, component of a THAP1/THAP3-HCFC1-OGT complex that contains at least, either THAP1 or THAP3, HCFC1 and OGT. Interacts directly with OGT and HCFC1 (via its HBM).

Its function is as follows. Component of a THAP1/THAP3-HCFC1-OGT complex that is required for the regulation of the transcriptional activity of RRM1. The protein is THAP domain-containing protein 3 (THAP3) of Bos taurus (Bovine).